A 396-amino-acid polypeptide reads, in one-letter code: MANLPPVYIVSTARTPIGSFLGSLSSQTAVQLGSVAIKGAVERAGIKPEDVDEVFFGNVLSAGVGQGPARQCALGAGLPQTVIATTVNKVCASSLKAIILGAQNIMLGTSDIVVAGGTESMSNTPHYLPNLRNGAKYGDQTLVDGVLKDGLTDSFKKDHMGISAELCVDDHDLTREAQDEYAINSYKKAQAATEAGLFTEIVPVEIPGGRGKPAIKVERDDEVKNLNVDKLKAMRPAFKPDGTVTAPNAAPINDGAAAVVLVSEAKLKELNLKPVAKILGWGDAEREPERFTIAPALAIPKAIKHAGLTAEQVEYYEINEAFSAVALANMKILGLNPDQVNVYGGSVAIGHPLGCSGARIVTTLTSVLKERKAKIGAVGICNGGGGASAMVIENLQ.

Cys-91 (acyl-thioester intermediate) is an active-site residue. Tyr-186 serves as a coordination point for K(+). Asn-227 and Lys-230 together coordinate CoA. K(+)-binding residues include Ala-246, Pro-247, and Val-347. Residues His-351 and Cys-381 each act as proton acceptor in the active site. Residue Asn-382 coordinates chloride.

It belongs to the thiolase-like superfamily. Thiolase family. Homotetramer. K(+) serves as cofactor.

The protein resides in the cytoplasm. The protein localises to the cytosol. The enzyme catalyses 2 acetyl-CoA = acetoacetyl-CoA + CoA. Its pathway is metabolic intermediate biosynthesis; (R)-mevalonate biosynthesis; (R)-mevalonate from acetyl-CoA: step 1/3. Acetyl-CoA acetyltransferase; part of the first module of ergosterol biosynthesis pathway that includes the early steps of the pathway, conserved across all eukaryotes, and which results in the formation of mevalonate from acetyl-coenzyme A (acetyl-CoA). ERG10B catalyzes the formation of acetoacetyl-CoA from acetyl-CoA. The first module starts with the action of the cytosolic acetyl-CoA acetyltransferase ERG10B that catalyzes the formation of acetoacetyl-CoA. The hydroxymethylglutaryl-CoA synthases ERG13 then condenses acetyl-CoA with acetoacetyl-CoA to form HMG-CoA. The rate-limiting step of the early module is the reduction to mevalonate by the 3-hydroxy-3-methylglutaryl-coenzyme A (HMG-CoA) reductases HMG1. This is Acetyl-CoA acetyltransferase ERG10, cytosolic from Gibberella zeae (strain ATCC MYA-4620 / CBS 123657 / FGSC 9075 / NRRL 31084 / PH-1) (Wheat head blight fungus).